We begin with the raw amino-acid sequence, 388 residues long: GTPase Obg (388 aa).

Positions 4-162 constitute an Obg domain; it reads SNFVDYVKIY…MTVIMELKLL (159 aa). Residues 163 to 329 form the OBG-type G domain; the sequence is ADVGLVGFPN…LKDILWEELN (167 aa). GTP-binding positions include 169 to 176, 194 to 198, 216 to 219, 283 to 286, and 310 to 312; these read GFPNAGKS, FTTLE, DIPG, TKSD, and SSV. Residues S176 and T196 each contribute to the Mg(2+) site. Residues 352–388 are disordered; the sequence is LKDMGEDEELDYEYEEDADDEDDDLDYEYEEEDWEEK. A compositionally biased stretch (acidic residues) spans 356–388; that stretch reads GEDEELDYEYEEDADDEDDDLDYEYEEEDWEEK.

It belongs to the TRAFAC class OBG-HflX-like GTPase superfamily. OBG GTPase family. In terms of assembly, monomer. Mg(2+) is required as a cofactor.

Its subcellular location is the cytoplasm. Functionally, an essential GTPase which binds GTP, GDP and possibly (p)ppGpp with moderate affinity, with high nucleotide exchange rates and a fairly low GTP hydrolysis rate. Plays a role in control of the cell cycle, stress response, ribosome biogenesis and in those bacteria that undergo differentiation, in morphogenesis control. The protein is GTPase Obg of Bacteroides thetaiotaomicron (strain ATCC 29148 / DSM 2079 / JCM 5827 / CCUG 10774 / NCTC 10582 / VPI-5482 / E50).